Consider the following 144-residue polypeptide: Large ribosomal subunit protein uL15 (144 aa).

The segment at M1–Q54 is disordered. Gly residues-rich tracts occupy residues R21 to A31 and S42 to G52.

The protein belongs to the universal ribosomal protein uL15 family. In terms of assembly, part of the 50S ribosomal subunit.

Its function is as follows. Binds to the 23S rRNA. In Shewanella oneidensis (strain ATCC 700550 / JCM 31522 / CIP 106686 / LMG 19005 / NCIMB 14063 / MR-1), this protein is Large ribosomal subunit protein uL15.